The primary structure comprises 562 residues: Gut esterase 1 (562 aa).

Positions 1 to 16 (MRIFLVSVILINACWA) are cleaved as a signal peptide. Asn-73 is a glycosylation site (N-linked (GlcNAc...) asparagine; atypical). An intrachain disulfide couples Cys-75 to Cys-93. Catalysis depends on Ser-198, which acts as the Acyl-ester intermediate. Residues Cys-250 and Cys-258 are joined by a disulfide bond. Active-site charge relay system residues include Glu-319 and His-452. A Prevents secretion from ER motif is present at residues 559-562 (KDEL).

This sequence belongs to the type-B carboxylesterase/lipase family. As to expression, expressed only in the intestine.

The protein localises to the endoplasmic reticulum lumen. The enzyme catalyses a carboxylic ester + H2O = an alcohol + a carboxylate + H(+). The protein is Gut esterase 1 (ges-1) of Caenorhabditis elegans.